We begin with the raw amino-acid sequence, 232 residues long: 2-C-methyl-D-erythritol 4-phosphate cytidylyltransferase (232 aa).

This sequence belongs to the IspD/TarI cytidylyltransferase family. IspD subfamily.

It catalyses the reaction 2-C-methyl-D-erythritol 4-phosphate + CTP + H(+) = 4-CDP-2-C-methyl-D-erythritol + diphosphate. Its pathway is isoprenoid biosynthesis; isopentenyl diphosphate biosynthesis via DXP pathway; isopentenyl diphosphate from 1-deoxy-D-xylulose 5-phosphate: step 2/6. Catalyzes the formation of 4-diphosphocytidyl-2-C-methyl-D-erythritol from CTP and 2-C-methyl-D-erythritol 4-phosphate (MEP). The protein is 2-C-methyl-D-erythritol 4-phosphate cytidylyltransferase of Synechococcus sp. (strain ATCC 27144 / PCC 6301 / SAUG 1402/1) (Anacystis nidulans).